The sequence spans 613 residues: 4-hydroxy-3-methylbut-2-en-1-yl diphosphate synthase (flavodoxin) (613 aa).

[4Fe-4S] cluster is bound by residues Cys-521, Cys-524, Cys-555, and Glu-562.

The protein belongs to the IspG family. [4Fe-4S] cluster serves as cofactor.

It catalyses the reaction (2E)-4-hydroxy-3-methylbut-2-enyl diphosphate + oxidized [flavodoxin] + H2O + 2 H(+) = 2-C-methyl-D-erythritol 2,4-cyclic diphosphate + reduced [flavodoxin]. It functions in the pathway isoprenoid biosynthesis; isopentenyl diphosphate biosynthesis via DXP pathway; isopentenyl diphosphate from 1-deoxy-D-xylulose 5-phosphate: step 5/6. Its function is as follows. Converts 2C-methyl-D-erythritol 2,4-cyclodiphosphate (ME-2,4cPP) into 1-hydroxy-2-methyl-2-(E)-butenyl 4-diphosphate. This Bacteroides thetaiotaomicron (strain ATCC 29148 / DSM 2079 / JCM 5827 / CCUG 10774 / NCTC 10582 / VPI-5482 / E50) protein is 4-hydroxy-3-methylbut-2-en-1-yl diphosphate synthase (flavodoxin).